Reading from the N-terminus, the 1319-residue chain is Probable membrane antigen 3 (1319 aa).

The protein localises to the virion tegument. This Equine herpesvirus 2 (strain 86/87) (EHV-2) protein is Probable membrane antigen 3 (3).